The following is a 169-amino-acid chain: Ribosome maturation factor RimM (169 aa).

The PRC barrel domain occupies 97-169 (PGEYYWYQLI…VITVDWDMNF (73 aa)).

Belongs to the RimM family. In terms of assembly, binds ribosomal protein uS19.

The protein localises to the cytoplasm. Its function is as follows. An accessory protein needed during the final step in the assembly of 30S ribosomal subunit, possibly for assembly of the head region. Essential for efficient processing of 16S rRNA. May be needed both before and after RbfA during the maturation of 16S rRNA. It has affinity for free ribosomal 30S subunits but not for 70S ribosomes. In Legionella pneumophila (strain Paris), this protein is Ribosome maturation factor RimM.